The chain runs to 114 residues: uncharacterized protein (114 aa).

A helical membrane pass occupies residues 13–30 (LYISAAGIASIYVVKTIV).

It is found in the mitochondrion outer membrane. This is an uncharacterized protein from Saccharomyces cerevisiae (strain ATCC 204508 / S288c) (Baker's yeast).